Consider the following 122-residue polypeptide: Large ribosomal subunit protein uL14 (122 aa).

It belongs to the universal ribosomal protein uL14 family. As to quaternary structure, part of the 50S ribosomal subunit. Forms a cluster with proteins L3 and L19. In the 70S ribosome, L14 and L19 interact and together make contacts with the 16S rRNA in bridges B5 and B8.

Functionally, binds to 23S rRNA. Forms part of two intersubunit bridges in the 70S ribosome. The polypeptide is Large ribosomal subunit protein uL14 (Pseudothermotoga lettingae (strain ATCC BAA-301 / DSM 14385 / NBRC 107922 / TMO) (Thermotoga lettingae)).